The primary structure comprises 95 residues: Small ribosomal subunit protein bS6 (95 aa).

The protein belongs to the bacterial ribosomal protein bS6 family.

Its function is as follows. Binds together with bS18 to 16S ribosomal RNA. The protein is Small ribosomal subunit protein bS6 of Corynebacterium glutamicum (strain ATCC 13032 / DSM 20300 / JCM 1318 / BCRC 11384 / CCUG 27702 / LMG 3730 / NBRC 12168 / NCIMB 10025 / NRRL B-2784 / 534).